The following is a 496-amino-acid chain: Glycerol kinase (496 aa).

Residue T12 participates in ADP binding. ATP contacts are provided by T12, T13, and S14. T12 serves as a coordination point for sn-glycerol 3-phosphate. R16 provides a ligand contact to ADP. R82, E83, and Y134 together coordinate sn-glycerol 3-phosphate. Residues R82, E83, and Y134 each contribute to the glycerol site. H230 carries the phosphohistidine; by HPr modification. D244 provides a ligand contact to sn-glycerol 3-phosphate. Residues D244 and Q245 each coordinate glycerol. ADP is bound by residues T266 and G309. Residues T266, G309, Q313, and G410 each contribute to the ATP site. 2 residues coordinate ADP: G410 and N414.

The protein belongs to the FGGY kinase family. Homotetramer and homodimer (in equilibrium). Post-translationally, the phosphoenolpyruvate-dependent sugar phosphotransferase system (PTS), including enzyme I, and histidine-containing protein (HPr) are required for the phosphorylation, which leads to the activation of the enzyme.

The catalysed reaction is glycerol + ATP = sn-glycerol 3-phosphate + ADP + H(+). The protein operates within polyol metabolism; glycerol degradation via glycerol kinase pathway; sn-glycerol 3-phosphate from glycerol: step 1/1. With respect to regulation, activated by phosphorylation and inhibited by fructose 1,6-bisphosphate (FBP). Functionally, key enzyme in the regulation of glycerol uptake and metabolism. Catalyzes the phosphorylation of glycerol to yield sn-glycerol 3-phosphate. The protein is Glycerol kinase of Bacillus thuringiensis (strain Al Hakam).